The following is a 108-amino-acid chain: UPF0145 protein LACR_1006 (108 aa).

Belongs to the UPF0145 family.

In Lactococcus lactis subsp. cremoris (strain SK11), this protein is UPF0145 protein LACR_1006.